Reading from the N-terminus, the 228-residue chain is 7-cyano-7-deazaguanine synthase (228 aa).

An ATP-binding site is contributed by 7 to 17 (LSGGLDSSTAL). The Zn(2+) site is built by Cys-190, Cys-202, Cys-205, and Cys-208.

This sequence belongs to the QueC family. Requires Zn(2+) as cofactor.

The catalysed reaction is 7-carboxy-7-deazaguanine + NH4(+) + ATP = 7-cyano-7-deazaguanine + ADP + phosphate + H2O + H(+). The protein operates within purine metabolism; 7-cyano-7-deazaguanine biosynthesis. Its function is as follows. Catalyzes the ATP-dependent conversion of 7-carboxy-7-deazaguanine (CDG) to 7-cyano-7-deazaguanine (preQ(0)). The sequence is that of 7-cyano-7-deazaguanine synthase from Acaryochloris marina (strain MBIC 11017).